Reading from the N-terminus, the 121-residue chain is Large ribosomal subunit protein bL12 (121 aa).

This sequence belongs to the bacterial ribosomal protein bL12 family. In terms of assembly, homodimer. Part of the ribosomal stalk of the 50S ribosomal subunit. Forms a multimeric L10(L12)X complex, where L10 forms an elongated spine to which 2 to 4 L12 dimers bind in a sequential fashion. Binds GTP-bound translation factors.

Forms part of the ribosomal stalk which helps the ribosome interact with GTP-bound translation factors. Is thus essential for accurate translation. The chain is Large ribosomal subunit protein bL12 from Xanthomonas axonopodis pv. citri (strain 306).